A 457-amino-acid chain; its full sequence is Cysteine--tRNA ligase (457 aa).

Cysteine 27 contacts Zn(2+). Positions 29–39 (PTVYDFAHIGN) match the 'HIGH' region motif. Residues cysteine 211, histidine 236, and glutamate 240 each contribute to the Zn(2+) site. Residues 269 to 273 (KMSKS) carry the 'KMSKS' region motif. Lysine 272 provides a ligand contact to ATP.

It belongs to the class-I aminoacyl-tRNA synthetase family. As to quaternary structure, monomer. Zn(2+) serves as cofactor.

The protein resides in the cytoplasm. The enzyme catalyses tRNA(Cys) + L-cysteine + ATP = L-cysteinyl-tRNA(Cys) + AMP + diphosphate. This Ehrlichia ruminantium (strain Gardel) protein is Cysteine--tRNA ligase.